A 247-amino-acid chain; its full sequence is Probable transcriptional regulatory protein Gura_1416 (247 aa).

It belongs to the TACO1 family.

It is found in the cytoplasm. This Geotalea uraniireducens (strain Rf4) (Geobacter uraniireducens) protein is Probable transcriptional regulatory protein Gura_1416.